The chain runs to 78 residues: Probable [Fe-S]-dependent transcriptional repressor (78 aa).

The iron-sulfur cluster site is built by Cys56, Cys61, Cys64, and Cys70.

This sequence belongs to the FeoC family.

May function as a transcriptional regulator that controls feoABC expression. In Citrobacter koseri (strain ATCC BAA-895 / CDC 4225-83 / SGSC4696), this protein is Probable [Fe-S]-dependent transcriptional repressor.